Reading from the N-terminus, the 711-residue chain is Mitochondrial intermediate peptidase (711 aa).

Residues Met-1–Asp-33 constitute a mitochondrion transit peptide. Lys-124 is subject to N6-acetyllysine. His-493 is a binding site for Zn(2+). The active site involves Glu-494. His-497 and His-500 together coordinate Zn(2+).

The protein belongs to the peptidase M3 family. As to quaternary structure, monomer. The cofactor is Zn(2+).

It is found in the mitochondrion matrix. The enzyme catalyses Release of an N-terminal octapeptide as second stage of processing of some proteins imported into the mitochondrion.. Its activity is regulated as follows. Activity is divalent cation-dependent. It is stimulated by manganese, magnesium or calcium ions and reversibly inhibited by zinc, cobalt and iron. In terms of biological role, cleaves proteins, imported into the mitochondrion, to their mature size. This is Mitochondrial intermediate peptidase (Mipep) from Mus musculus (Mouse).